The primary structure comprises 31 residues: Cyclotide psybry C (31 aa).

The cyclopeptide (Gly-Asn) cross-link spans 1 to 31 (GFNPCGETCQIDQTCHAPGCTCSIANICVRN). 3 cysteine pairs are disulfide-bonded: C5–C20, C9–C22, and C15–C28.

Post-translationally, this is a cyclic peptide.

Its function is as follows. Probably participates in a plant defense mechanism. The protein is Cyclotide psybry C of Psychotria brachyceras.